A 474-amino-acid chain; its full sequence is PRAME family member 14 (474 aa).

5 LRR repeats span residues 15–38 (QSLL…LYLP), 204–229 (LNSI…CYLK), 271–294 (LLKI…LQNP), 319–342 (LGYL…PLGA), and 391–414 (MGAL…TYPA).

The protein belongs to the PRAME family.

The protein is PRAME family member 14 of Homo sapiens (Human).